The following is a 544-amino-acid chain: Probable protein kinase UbiB (544 aa).

The 379-residue stretch at 123–501 (DFDIKPLASA…KRQQGTGKFL (379 aa)) folds into the Protein kinase domain. Residues 129–137 (LASASIAQV) and Lys-152 contribute to the ATP site. The active-site Proton acceptor is the Asp-287. 2 helical membrane-spanning segments follow: residues 496–516 (GTGK…AIWI) and 519–539 (QLEP…LLSW).

This sequence belongs to the ABC1 family. UbiB subfamily.

It localises to the cell inner membrane. Its pathway is cofactor biosynthesis; ubiquinone biosynthesis [regulation]. Functionally, is probably a protein kinase regulator of UbiI activity which is involved in aerobic coenzyme Q (ubiquinone) biosynthesis. The protein is Probable protein kinase UbiB of Vibrio cholerae serotype O1 (strain ATCC 39541 / Classical Ogawa 395 / O395).